A 202-amino-acid chain; its full sequence is Nigerythrin (202 aa).

The Ferritin-like diiron domain maps to 23 to 168 (KTAVGSTLEN…AYNDIDAPDD (146 aa)). Glutamate 40, glutamate 73, glutamate 115, glutamate 118, glutamate 149, histidine 152, cysteine 174, cysteine 177, cysteine 189, and cysteine 192 together coordinate Fe cation. The Rubredoxin-like domain occupies 169–202 (DKFHLCPICGYIHKGEDFEKCPICFRPKDTFTAY).

As to quaternary structure, homodimer. May possess two rubredoxin-like centers and two hemerythrin-like binuclear-iron centers per dimer.

The protein resides in the cytoplasm. Functionally, exhibits NADH peroxidase activity (in vitro). The protein is Nigerythrin (ngr) of Nitratidesulfovibrio vulgaris (strain ATCC 29579 / DSM 644 / CCUG 34227 / NCIMB 8303 / VKM B-1760 / Hildenborough) (Desulfovibrio vulgaris).